The primary structure comprises 639 residues: Extracellular metalloproteinase NpIII (639 aa).

The first 16 residues, 1 to 16 (MHMLLFIGALALPVFV), serve as a signal peptide directing secretion. A propeptide spanning residues 17–245 (CTQSCEPASL…IHGVVDYVSE (229 aa)) is cleaved from the precursor. Asn287, Asn320, Asn336, and Asn368 each carry an N-linked (GlcNAc...) asparagine glycan. A Zn(2+)-binding site is contributed by His429. Glu430 is a catalytic residue. His433 is a binding site for Zn(2+). Asn509 carries an N-linked (GlcNAc...) asparagine glycan.

This sequence belongs to the peptidase M36 family. It depends on Zn(2+) as a cofactor.

The protein resides in the secreted. Secreted metalloproteinase that allows assimilation of proteinaceous substrates. This chain is Extracellular metalloproteinase NpIII (NpIII), found in Aspergillus oryzae (strain ATCC 42149 / RIB 40) (Yellow koji mold).